The sequence spans 293 residues: 4-hydroxy-tetrahydrodipicolinate synthase (293 aa).

Pyruvate is bound at residue threonine 45. Tyrosine 133 acts as the Proton donor/acceptor in catalysis. Residue lysine 161 is the Schiff-base intermediate with substrate of the active site. Residue isoleucine 203 coordinates pyruvate.

Belongs to the DapA family. Homotetramer; dimer of dimers.

It is found in the cytoplasm. It carries out the reaction L-aspartate 4-semialdehyde + pyruvate = (2S,4S)-4-hydroxy-2,3,4,5-tetrahydrodipicolinate + H2O + H(+). The protein operates within amino-acid biosynthesis; L-lysine biosynthesis via DAP pathway; (S)-tetrahydrodipicolinate from L-aspartate: step 3/4. In terms of biological role, catalyzes the condensation of (S)-aspartate-beta-semialdehyde [(S)-ASA] and pyruvate to 4-hydroxy-tetrahydrodipicolinate (HTPA). This chain is 4-hydroxy-tetrahydrodipicolinate synthase, found in Syntrophotalea carbinolica (strain DSM 2380 / NBRC 103641 / GraBd1) (Pelobacter carbinolicus).